The following is a 60-amino-acid chain: Large ribosomal subunit protein bL32 (60 aa).

The disordered stretch occupies residues 1-28 (MAVQQNKKSRSKRDMRRSHDALTGPTLS). Basic residues predominate over residues 7–16 (KKSRSKRDMR).

The protein belongs to the bacterial ribosomal protein bL32 family.

The protein is Large ribosomal subunit protein bL32 of Cellvibrio japonicus (strain Ueda107) (Pseudomonas fluorescens subsp. cellulosa).